The chain runs to 177 residues: Ubiquitin-conjugating enzyme E2 C (177 aa).

The tract at residues 1–31 (MSGQNIDPAANQVRQKERPRDMTTSKERHSV) is disordered. Over residues 14 to 30 (RQKERPRDMTTSKERHS) the composition is skewed to basic and acidic residues. A UBC core domain is found at 30 to 175 (SVSKRLQQEL…LHEKYKTAQS (146 aa)). Cysteine 114 functions as the Glycyl thioester intermediate in the catalytic mechanism.

Belongs to the ubiquitin-conjugating enzyme family. As to quaternary structure, component of the APC/C complex. In terms of processing, autoubiquitinated by the APC/C complex, leading to its degradation by the proteasome.

It catalyses the reaction S-ubiquitinyl-[E1 ubiquitin-activating enzyme]-L-cysteine + [E2 ubiquitin-conjugating enzyme]-L-cysteine = [E1 ubiquitin-activating enzyme]-L-cysteine + S-ubiquitinyl-[E2 ubiquitin-conjugating enzyme]-L-cysteine.. It carries out the reaction S-ubiquitinyl-[E1 ubiquitin-activating enzyme]-L-cysteine + [acceptor protein]-L-lysine = [E1 ubiquitin-activating enzyme]-L-cysteine + N(6)-monoubiquitinyl-[acceptor protein]-L-lysine.. It participates in protein modification; protein ubiquitination. Functionally, catalyzes the covalent attachment of ubiquitin to other proteins. Acts as an essential factor of the anaphase promoting complex/cyclosome (APC/C), a cell cycle-regulated ubiquitin ligase that is essential for the transition from metaphase to anaphase in mitosis. Involved in both degradation of proteins responsible for maintaining sister chromatid cohesion at the onset of anaphase and of mitotic cyclins A and B at the exit of mitosis. Acts by initiating polyubiquitin chains on APC/C substrates, leading to the degradation of APC/C substrates by the proteasome and promoting mitotic exit. This is Ubiquitin-conjugating enzyme E2 C (UBE2C) from Spisula solidissima (Atlantic surf-clam).